The sequence spans 702 residues: Arginine decarboxylase 1 (702 aa).

At K151 the chain carries N6-(pyridoxal phosphate)lysine. 336 to 346 (IDVGGGLGIDY) serves as a coordination point for substrate. Residues 668–686 (ASGESSGMSSDSEGSAAGA) are compositionally biased toward low complexity. The segment at 668 to 702 (ASGESSGMSSDSEGSAAGAAEEDDDEWEFMRGLTV) is disordered.

It belongs to the Orn/Lys/Arg decarboxylase class-II family. SpeA subfamily. Pyridoxal 5'-phosphate serves as cofactor. It depends on Mg(2+) as a cofactor. As to expression, expressed in roots, leaves and stems (at protein level).

It catalyses the reaction L-arginine + H(+) = agmatine + CO2. The protein operates within amine and polyamine biosynthesis; agmatine biosynthesis; agmatine from L-arginine: step 1/1. In Oryza sativa subsp. japonica (Rice), this protein is Arginine decarboxylase 1 (ADC1).